We begin with the raw amino-acid sequence, 266 residues long: NADP-dependent mannitol dehydrogenase (266 aa).

Positions 107 and 140 each coordinate NADP(+). Residue S159 is the Proton donor of the active site. Y174, K178, I206, and T208 together coordinate NADP(+). The active-site Proton acceptor is Y174. K178 acts as the Lowers pKa of active site Tyr in catalysis.

The protein belongs to the short-chain dehydrogenases/reductases (SDR) family. Homotetramer.

The catalysed reaction is D-mannitol + NADP(+) = D-fructose + NADPH + H(+). Functionally, catalyzes the interconversion between D-mannitol and D-fructose. Plays a key role in liamocins biosynthesis by providing the mannitol moity that is linked to 3,5-dihydroxydecanoic acid (provided by the HR-PKS PKS1) via ester bond formation catalyzed by the esterase EST1. The sequence is that of NADP-dependent mannitol dehydrogenase from Aureobasidium melanogenum (Aureobasidium pullulans var. melanogenum).